The sequence spans 239 residues: uncharacterized protein (239 aa).

The N-terminal stretch at 1–19 is a signal peptide; it reads MPLLHRTIIFLQLLGTISS. Asn-44, Asn-58, Asn-72, Asn-92, Asn-109, Asn-136, Asn-172, Asn-192, and Asn-213 each carry an N-linked (GlcNAc...) asparagine glycan.

It localises to the secreted. This is an uncharacterized protein from Caenorhabditis elegans.